The chain runs to 381 residues: 3-dehydroquinate synthase (381 aa).

Residues 81–86 (EGESSK), 115–119 (GVIGD), 139–140 (TS), K152, and K161 contribute to the NAD(+) site. Positions 194, 256, and 274 each coordinate Zn(2+).

The protein belongs to the sugar phosphate cyclases superfamily. Dehydroquinate synthase family. Co(2+) serves as cofactor. The cofactor is Zn(2+). NAD(+) is required as a cofactor.

Its subcellular location is the cytoplasm. It catalyses the reaction 7-phospho-2-dehydro-3-deoxy-D-arabino-heptonate = 3-dehydroquinate + phosphate. It functions in the pathway metabolic intermediate biosynthesis; chorismate biosynthesis; chorismate from D-erythrose 4-phosphate and phosphoenolpyruvate: step 2/7. Its function is as follows. Catalyzes the conversion of 3-deoxy-D-arabino-heptulosonate 7-phosphate (DAHP) to dehydroquinate (DHQ). This chain is 3-dehydroquinate synthase, found in Rhodopseudomonas palustris (strain TIE-1).